Consider the following 228-residue polypeptide: Glycerol-3-phosphate acyltransferase (228 aa).

The next 6 helical transmembrane spans lie at methionine 1–threonine 21, valine 56–valine 76, methionine 104–phenylalanine 124, isoleucine 136–leucine 156, isoleucine 161–glycine 181, and proline 183–serine 203.

The protein belongs to the PlsY family. In terms of assembly, probably interacts with PlsX.

The protein resides in the cell inner membrane. The enzyme catalyses an acyl phosphate + sn-glycerol 3-phosphate = a 1-acyl-sn-glycero-3-phosphate + phosphate. The protein operates within lipid metabolism; phospholipid metabolism. Catalyzes the transfer of an acyl group from acyl-phosphate (acyl-PO(4)) to glycerol-3-phosphate (G3P) to form lysophosphatidic acid (LPA). This enzyme utilizes acyl-phosphate as fatty acyl donor, but not acyl-CoA or acyl-ACP. The protein is Glycerol-3-phosphate acyltransferase of Trichodesmium erythraeum (strain IMS101).